Here is a 270-residue protein sequence, read N- to C-terminus: Glutamate racemase (270 aa).

Substrate is bound by residues 13–14 (DS) and 45–46 (YG). C77 serves as the catalytic Proton donor/acceptor. 78-79 (NT) serves as a coordination point for substrate. The active-site Proton donor/acceptor is the C185. 186–187 (TH) is a substrate binding site.

Belongs to the aspartate/glutamate racemases family.

The catalysed reaction is L-glutamate = D-glutamate. It functions in the pathway cell wall biogenesis; peptidoglycan biosynthesis. Its function is as follows. Provides the (R)-glutamate required for cell wall biosynthesis. The polypeptide is Glutamate racemase (Vibrio parahaemolyticus serotype O3:K6 (strain RIMD 2210633)).